The primary structure comprises 582 residues: MAPRKTVGILGGGQLGRMLTHPAALLGIPLLILDSGSFTPAKQTLLPPPSHSHPDGPFTSEPHIRKLASACDILTVEIEHVNADVLEAVEKEGLCEVQPSPKTIRLIQNKYDQKKYLAEKGVAVAPFEELPANPTEEDFKAIAGRLGLPLMLKAKTLAYDGRGNSPLKSTSSEDIQASLKFLGDRPLYAEGWAPFVKEVAVMVVRNKEGEVQSYDAVETIHRESILRVCLAPLRGERGVNQRARELAEKAVGHLEGAGIFGVEMFLMPDGELLLNEIAPRPHNSGHHTIEACLTSQFENHLRAILSLPLGSTALRVPSAAMVNILGASSTMDAIDKMADNALTVPGAAVHLYGKAESRKARKMGHITVTAESDAELNERLRTLLFAQPDAHADWIDLIAPPSPAPAHSHPKPLVGIIMGSDSDLPVMHPATKILEKFGVPYELTITSAHRTPERMVKYAKTAAGRGLRAIIAGAGGAAHLPGMVASETSLPVIGVPVKASVLDGVDSLYSIVQMPRGIPCATVGINNSTNAALLAIRILGTSVPALNKATEEYSKALEEEVLAKVDILEEEGWDKYIERLKK.

Residues 114–305 (KKYLAEKGVA…QFENHLRAIL (192 aa)) enclose the ATP-grasp domain. 143 to 200 (AGRLGLPLMLKAKTLAYDGRGNSPLKSTSSEDIQASLKFLGDRPLYAEGWAPFVKEVA) provides a ligand contact to ATP.

The protein in the C-terminal section; belongs to the AIR carboxylase family. Class I subfamily.

The enzyme catalyses 5-amino-1-(5-phospho-D-ribosyl)imidazole-4-carboxylate + H(+) = 5-amino-1-(5-phospho-beta-D-ribosyl)imidazole + CO2. Its pathway is purine metabolism; IMP biosynthesis via de novo pathway; 5-amino-1-(5-phospho-D-ribosyl)imidazole-4-carboxylate from 5-amino-1-(5-phospho-D-ribosyl)imidazole (carboxylase route): step 1/1. The protein is Phosphoribosylaminoimidazole carboxylase (ADE2) of Cryptococcus neoformans var. grubii serotype A (strain H99 / ATCC 208821 / CBS 10515 / FGSC 9487) (Filobasidiella neoformans var. grubii).